The following is a 526-amino-acid chain: Alpha-N-acetylgalactosaminide alpha-2,6-sialyltransferase 1 (526 aa).

Residues 1-12 (MTRYCRGLSQRQ) are Cytoplasmic-facing. Residues 13 to 33 (AFLLLTVLALLFILLFVVKDP) traverse the membrane as a helical; Signal-anchor for type II membrane protein segment. The Lumenal segment spans residues 34 to 526 (RAKDSRCQFI…QRPQSDKAKN (493 aa)). Positions 49 to 182 (SAQENQQKAE…TRRRQRLKAS (134 aa)) are disordered. The span at 81-106 (KDLKKQEREAVQGEQAEGKEKRKLET) shows a compositional bias: basic and acidic residues. Residues 161–171 (ATKSPASSPHP) are compositionally biased toward polar residues. N-linked (GlcNAc...) asparagine glycans are attached at residues Asn206, Asn228, Asn259, Asn303, and Asn388. 2 disulfides stabilise this stretch: Cys207–Cys290 and Cys293–Cys461.

This sequence belongs to the glycosyltransferase 29 family. In terms of processing, glycosylated; autosialylated. In terms of tissue distribution, submaxillary gland, mammary gland, spleen and colon.

The protein localises to the golgi apparatus membrane. The catalysed reaction is a beta-D-galactosyl-(1-&gt;3)-N-acetyl-alpha-D-galactosaminyl derivative + CMP-N-acetyl-beta-neuraminate = a beta-D-galactosyl-(1-&gt;3)-[N-acetyl-alpha-neuraminyl-(2-&gt;6)]-N-acetyl-alpha-D-galactosaminyl derivative + CMP + H(+). The enzyme catalyses a 3-O-[N-acetyl-alpha-D-galactosaminyl]-L-seryl-[protein] + CMP-N-acetyl-beta-neuraminate = a 3-O-[N-acetyl-alpha-neuraminosyl-(2-&gt;6)-N-acetyl-alpha-D-galactosaminyl]-L-seryl-[protein] + CMP + H(+). It carries out the reaction a 3-O-[N-acetyl-alpha-D-galactosaminyl]-L-threonyl-[protein] + CMP-N-acetyl-beta-neuraminate = a 3-O-[N-acetyl-alpha-neuraminosyl-(2-&gt;6)-N-acetyl-alpha-D-galactosaminyl]-L-threonyl-[protein] + CMP + H(+). It catalyses the reaction a 3-O-[beta-D-galactosyl-(1-&gt;3)-N-acetyl-alpha-D-galactosaminyl]-L-seryl-[protein] + CMP-N-acetyl-beta-neuraminate = a 3-O-{beta-D-galactosyl-(1-&gt;3)-[N-acetyl-alpha-neuraminosyl-(2-&gt;6)]-N-acetyl-alpha-D-galactosaminyl}-L-seryl-[protein] + CMP + H(+). The catalysed reaction is a 3-O-[beta-D-galactosyl-(1-&gt;3)-N-acetyl-alpha-D-galactosaminyl]-L-threonyl-[protein] + CMP-N-acetyl-beta-neuraminate = a 3-O-{beta-D-galactosyl-(1-&gt;3)-[N-acetyl-alpha-neuraminosyl-(2-&gt;6)]-N-acetyl-alpha-D-galactosaminyl}-L-threonyl-[protein] + CMP + H(+). The enzyme catalyses a 3-O-[N-acetyl-alpha-neuraminyl-(2-&gt;3)-beta-D-galactosyl-(1-&gt;3)-N-acetyl-alpha-D-galactosaminyl]-L-threonyl-[protein] + CMP-N-acetyl-beta-neuraminate = a 3-O-{alpha-Neu5Ac-(2-&gt;3)-beta-D-Gal-(1-&gt;3)-[alpha-Neu5Ac-(2-&gt;6)]-alpha-D-GalNAc}-L-threonyl-[protein] + CMP + H(+). It participates in protein modification; protein glycosylation. Protein sialyltransferase specifically expressed in goblet cells that plays a key role in intestinal host-commensal homeostasis. Conjugates sialic acid with an alpha-2-6 linkage to N-acetylgalactosamine (GalNAc) glycan chains linked to serine or threonine in glycoproteins. Catalyzes the formation of the sialyl-Tn (S-Tn) antigen, an antigen found in intestinal goblet cells. Protein sialylation in globlet cells is essential for mucus integrity and is required to protect the intestinal mucus against excessive bacterial proteolytic degradation. This Mus musculus (Mouse) protein is Alpha-N-acetylgalactosaminide alpha-2,6-sialyltransferase 1.